The following is a 3083-amino-acid chain: Genome polyprotein (3083 aa).

The Peptidase S30 domain maps to Ile173–Tyr313. The For P1 proteinase activity role is filled by Ser267. The Involved in interaction with stylet and aphid transmission motif lies at Lys365–Cys368. The Involved in virions binding and aphid transmission motif lies at Pro621–Lys623. A Peptidase C6 domain is found at Met647–Gly769. Active-site for helper component proteinase activity residues include Cys655 and His728. Residues Glu1239–Glu1391 enclose the Helicase ATP-binding domain. Gly1252–Ser1259 contacts ATP. Positions Asp1341–His1344 match the DECH box motif. A Helicase C-terminal domain is found at Asp1410–Ser1569. The short motif at Lys1894–Ser1903 is the Nuclear localization signal element. Tyr1918 is modified (O-(5'-phospho-RNA)-tyrosine). In terms of domain architecture, Peptidase C4 spans Ser2045–Asp2263. Catalysis depends on for nuclear inclusion protein A activity residues His2090, Asp2125, and Cys2195. The 125-residue stretch at Trp2529–Leu2653 folds into the RdRp catalytic domain. The disordered stretch occupies residues Gln2808 to His2855. Basic and acidic residues predominate over residues Ser2817–Val2831. A compositionally biased stretch (low complexity) spans Ala2832–Ala2844. Thr3065 is modified (phosphothreonine).

The protein belongs to the potyviridae genome polyprotein family. As to quaternary structure, interacts with host eIF4E protein (via cap-binding region); this interaction mediates the translation of the VPg-viral RNA conjugates. Part of a complex that comprises VPg, RNA, host EIF4E and EIF4G; this interaction mediates the translation of the VPg-viral RNA conjugates. In terms of processing, VPg is uridylylated by the polymerase and is covalently attached to the 5'-end of the genomic RNA. This uridylylated form acts as a nucleotide-peptide primer for the polymerase. Potyviral RNA is expressed as two polyproteins which undergo post-translational proteolytic processing. Genome polyprotein is processed by NIa-pro, P1 and HC-pro proteinases resulting in the production of at least ten individual proteins. P3N-PIPO polyprotein is cleaved by P1 and HC-pro proteinases resulting in the production of three individual proteins. The P1 proteinase and the HC-pro cleave only their respective C-termini autocatalytically. 6K1 is essential for proper proteolytic separation of P3 from CI.

It localises to the host cytoplasmic vesicle. The protein localises to the host nucleus. The protein resides in the virion. The catalysed reaction is RNA(n) + a ribonucleoside 5'-triphosphate = RNA(n+1) + diphosphate. It catalyses the reaction Hydrolyzes glutaminyl bonds, and activity is further restricted by preferences for the amino acids in P6 - P1' that vary with the species of potyvirus, e.g. Glu-Xaa-Xaa-Tyr-Xaa-Gln-|-(Ser or Gly) for the enzyme from tobacco etch virus. The natural substrate is the viral polyprotein, but other proteins and oligopeptides containing the appropriate consensus sequence are also cleaved.. It carries out the reaction Hydrolyzes a Gly-|-Gly bond at its own C-terminus, commonly in the sequence -Tyr-Xaa-Val-Gly-|-Gly, in the processing of the potyviral polyprotein.. In terms of biological role, required for aphid transmission and also has proteolytic activity. Only cleaves a Gly-Gly dipeptide at its own C-terminus. Interacts with virions and aphid stylets. Acts as a suppressor of RNA-mediated gene silencing, also known as post-transcriptional gene silencing (PTGS), a mechanism of plant viral defense that limits the accumulation of viral RNAs. May have RNA-binding activity. Has helicase activity. It may be involved in replication. Its function is as follows. Indispensable for virus replication. Reduces the abundance of host transcripts related to jasmonic acid biosynthesis therefore altering the host defenses. In order to increase its own stability, decreases host protein degradation pathways. Functionally, indispensable for virus replication. In terms of biological role, mediates the cap-independent, EIF4E-dependent translation of viral genomic RNAs. Binds to the cap-binding site of host EIF4E and thus interferes with the host EIF4E-dependent mRNA export and translation. VPg-RNA directly binds EIF4E and is a template for transcription. Also forms trimeric complexes with EIF4E-EIF4G, which are templates for translation. Has RNA-binding and proteolytic activities. Its function is as follows. An RNA-dependent RNA polymerase that plays an essential role in the virus replication. Functionally, involved in aphid transmission, cell-to-cell and systemis movement, encapsidation of the viral RNA and in the regulation of viral RNA amplification. The protein is Genome polyprotein of Zucchini yellow mosaic virus (strain Singapore) (ZYMV).